The sequence spans 148 residues: Large ribosomal subunit protein uL15 (148 aa).

Residues 1–10 (MQLHNLEYKK) are compositionally biased toward basic and acidic residues. Positions 1-42 (MQLHNLEYKKGSRNHKEKRVGRGHGSGLGKTSGRGQDGQKAR) are disordered. Basic residues predominate over residues 11–22 (GSRNHKEKRVGR). Positions 23–36 (GHGSGLGKTSGRGQ) are enriched in gly residues.

The protein belongs to the universal ribosomal protein uL15 family. As to quaternary structure, part of the 50S ribosomal subunit.

Functionally, binds to the 23S rRNA. The sequence is that of Large ribosomal subunit protein uL15 from Ureaplasma parvum serovar 3 (strain ATCC 27815 / 27 / NCTC 11736).